Consider the following 267-residue polypeptide: 4-hydroxy-tetrahydrodipicolinate reductase (267 aa).

NAD(+) is bound by residues 9–14 and Asp35; that span reads GAGGRM. Arg36 contributes to the NADP(+) binding site. Residues 99-101 and 123-126 each bind NAD(+); these read GTT and AANY. His156 serves as the catalytic Proton donor/acceptor. His157 contacts (S)-2,3,4,5-tetrahydrodipicolinate. The active-site Proton donor is Lys160. Residue 166-167 participates in (S)-2,3,4,5-tetrahydrodipicolinate binding; the sequence is GT.

It belongs to the DapB family.

Its subcellular location is the cytoplasm. The enzyme catalyses (S)-2,3,4,5-tetrahydrodipicolinate + NAD(+) + H2O = (2S,4S)-4-hydroxy-2,3,4,5-tetrahydrodipicolinate + NADH + H(+). The catalysed reaction is (S)-2,3,4,5-tetrahydrodipicolinate + NADP(+) + H2O = (2S,4S)-4-hydroxy-2,3,4,5-tetrahydrodipicolinate + NADPH + H(+). It participates in amino-acid biosynthesis; L-lysine biosynthesis via DAP pathway; (S)-tetrahydrodipicolinate from L-aspartate: step 4/4. Functionally, catalyzes the conversion of 4-hydroxy-tetrahydrodipicolinate (HTPA) to tetrahydrodipicolinate. This is 4-hydroxy-tetrahydrodipicolinate reductase from Halorhodospira halophila (strain DSM 244 / SL1) (Ectothiorhodospira halophila (strain DSM 244 / SL1)).